Consider the following 269-residue polypeptide: Protein MrkE (269 aa).

The Response regulatory domain maps to 59 to 173; that stretch reads KVIIVEDEFL…RIINMLQKLT (115 aa). Aspartate 110 bears the 4-aspartylphosphate mark. Positions 197–269 constitute an HTH LytTR-type domain; the sequence is INLIKDERII…VAQVSIANRF (73 aa).

In terms of biological role, may be involved in the regulation of fimbrial expression. In Klebsiella pneumoniae, this protein is Protein MrkE (mrkE).